Reading from the N-terminus, the 620-residue chain is 1-deoxy-D-xylulose-5-phosphate synthase (620 aa).

Residues His-80 and Gly-121 to Ser-123 contribute to the thiamine diphosphate site. Asp-152 contacts Mg(2+). Thiamine diphosphate-binding positions include Gly-153–Ala-154, Asn-181, Tyr-288, and Glu-370. Position 181 (Asn-181) interacts with Mg(2+).

The protein belongs to the transketolase family. DXPS subfamily. As to quaternary structure, homodimer. Requires Mg(2+) as cofactor. The cofactor is thiamine diphosphate.

The enzyme catalyses D-glyceraldehyde 3-phosphate + pyruvate + H(+) = 1-deoxy-D-xylulose 5-phosphate + CO2. The protein operates within metabolic intermediate biosynthesis; 1-deoxy-D-xylulose 5-phosphate biosynthesis; 1-deoxy-D-xylulose 5-phosphate from D-glyceraldehyde 3-phosphate and pyruvate: step 1/1. Functionally, catalyzes the acyloin condensation reaction between C atoms 2 and 3 of pyruvate and glyceraldehyde 3-phosphate to yield 1-deoxy-D-xylulose-5-phosphate (DXP). The chain is 1-deoxy-D-xylulose-5-phosphate synthase from Salmonella typhi.